Here is a 276-residue protein sequence, read N- to C-terminus: Large ribosomal subunit protein uL2 (276 aa).

Disordered stretches follow at residues 29 to 55 and 219 to 276; these read PEKS…RHRG and HVRG…RRTR. Positions 259–276 are enriched in basic residues; the sequence is TRNKKKQSSKLIVRRRTR.

It belongs to the universal ribosomal protein uL2 family. Part of the 50S ribosomal subunit. Forms a bridge to the 30S subunit in the 70S ribosome.

Functionally, one of the primary rRNA binding proteins. Required for association of the 30S and 50S subunits to form the 70S ribosome, for tRNA binding and peptide bond formation. It has been suggested to have peptidyltransferase activity; this is somewhat controversial. Makes several contacts with the 16S rRNA in the 70S ribosome. The chain is Large ribosomal subunit protein uL2 from Rippkaea orientalis (strain PCC 8801 / RF-1) (Cyanothece sp. (strain PCC 8801)).